Consider the following 868-residue polypeptide: MAHRWLILALVAAAAPRALASPGPSLNERQSDDEPFSPPYYPAPNGGWVSTWAEAYEKAHSIVSNLTLAEKVNLTTGTGIFMGPCAGQTGSVPRLGIPNLCLHDSPLGVRNTDHNTAFPPGITVGATFDKSLMYERGVGLGEEARGKGVNVLLGPSVGPLGRKPRGGRNWEGFGFDPVLQGIGGAETIKGMQSTGLIACIKHFVGNEQEMHRMSSVVTQGYSSNIDDRTLHELYIWPFAEGVRAEVGSVMIAYNDVNKSSCSQNSKLINGVLKDELGFQGFVVTDWLAHYGGVSSALAGLDMDMPGDGAVPLFGNSYWGPELSRSILNGTVPVERLNDMVTRILATWYKMGQDQDYPLPNFSSNTEDEKGLLYPGAVISPIGVVNQYVNVQGNHNITARAIARDAITLLKNEGDLLPLRRNDSLKVFGTDAGPDPQGLNSCADKGCNRGVLTMGWGSGTSKLPYLITPQEAIANITPTAEFFITDSFPSSVDANDEDIAIVFINSDSGENYITVDGNPGDRKTSGLHAWHNGDELVKAAAERFSQVVVVIHTVGPIILEEWIDLDSVKAVLIAHLPGQEAGYSLTDVLFGDYSPSGHLPYTIPYQESNYPSSVGLLQQPFGQIQDYYTEGLYIDYRHFLKEDITPRYAFGHGLSYTTFEFSEPALSVVTPLDSAYPPSRPAKGPTPTYPNTIPPASEAAWPAKFNRIWRYIYPYLNNPQADAAVANSSKTYPYPDGYSTDPQPPPRAGGAEGGNPALWDVAFSVQVTVTNTGQHSGRAVAQLYVELPDSLGLDTPSRQLRQFEKTKVLETGQSETLTLEVTRKDVSVWDVEVQDWKTVVGGEGVKIHIGESVLDIRTECEVGGRCVTL.

An N-terminal signal peptide occupies residues 1 to 20 (MAHRWLILALVAAAAPRALA). The interval 21 to 40 (SPGPSLNERQSDDEPFSPPY) is disordered. 3 N-linked (GlcNAc...) asparagine glycosylation sites follow: N65, N73, and N257. D285 is a catalytic residue. N-linked (GlcNAc...) asparagine glycosylation is found at N328, N360, N395, N421, and N726. The segment at 731–752 (YPYPDGYSTDPQPPPRAGGAEG) is disordered.

It belongs to the glycosyl hydrolase 3 family.

It is found in the secreted. It catalyses the reaction Hydrolysis of terminal, non-reducing beta-D-glucosyl residues with release of beta-D-glucose.. It participates in glycan metabolism; cellulose degradation. In terms of biological role, beta-glucosidases are one of a number of cellulolytic enzymes involved in the degradation of cellulosic biomass. Catalyzes the last step releasing glucose from the inhibitory cellobiose. The chain is Probable beta-glucosidase F (bglF) from Emericella nidulans (strain FGSC A4 / ATCC 38163 / CBS 112.46 / NRRL 194 / M139) (Aspergillus nidulans).